The primary structure comprises 1135 residues: DNA-directed RNA polymerase subunit beta' (1135 aa).

Cys-60, Cys-62, Cys-75, and Cys-78 together coordinate Zn(2+). Mg(2+) contacts are provided by Asp-450, Asp-452, and Asp-454. Zn(2+)-binding residues include Cys-795, Cys-869, Cys-876, and Cys-879.

The protein belongs to the RNA polymerase beta' chain family. As to quaternary structure, the RNAP catalytic core consists of 2 alpha, 1 beta, 1 beta' and 1 omega subunit. When a sigma factor is associated with the core the holoenzyme is formed, which can initiate transcription. Mg(2+) serves as cofactor. It depends on Zn(2+) as a cofactor.

It catalyses the reaction RNA(n) + a ribonucleoside 5'-triphosphate = RNA(n+1) + diphosphate. Functionally, DNA-dependent RNA polymerase catalyzes the transcription of DNA into RNA using the four ribonucleoside triphosphates as substrates. The sequence is that of DNA-directed RNA polymerase subunit beta' from Clostridium tetani (strain Massachusetts / E88).